A 260-amino-acid polypeptide reads, in one-letter code: Glutamate racemase (260 aa).

Substrate contacts are provided by residues D7 to S8 and Y39 to G40. Catalysis depends on C71, which acts as the Proton donor/acceptor. Residue N72–T73 participates in substrate binding. The Proton donor/acceptor role is filled by C182. T183–H184 provides a ligand contact to substrate.

Belongs to the aspartate/glutamate racemases family.

The catalysed reaction is L-glutamate = D-glutamate. It functions in the pathway cell wall biogenesis; peptidoglycan biosynthesis. In terms of biological role, provides the (R)-glutamate required for cell wall biosynthesis. The protein is Glutamate racemase of Sulfurihydrogenibium sp. (strain YO3AOP1).